The chain runs to 248 residues: Triosephosphate isomerase B (248 aa).

The substrate site is built by N11 and K13. H95 functions as the Electrophile in the catalytic mechanism. The active-site Proton acceptor is the E165.

The protein belongs to the triosephosphate isomerase family. As to quaternary structure, homodimer.

It is found in the cytoplasm. The catalysed reaction is dihydroxyacetone phosphate = methylglyoxal + phosphate. It catalyses the reaction D-glyceraldehyde 3-phosphate = dihydroxyacetone phosphate. The protein operates within carbohydrate degradation; glycolysis; D-glyceraldehyde 3-phosphate from glycerone phosphate: step 1/1. It participates in carbohydrate biosynthesis; gluconeogenesis. Functionally, triosephosphate isomerase is an extremely efficient metabolic enzyme that catalyzes the interconversion between dihydroxyacetone phosphate (DHAP) and D-glyceraldehyde-3-phosphate (G3P) in glycolysis and gluconeogenesis. In terms of biological role, it is also responsible for the non-negligible production of methylglyoxal a reactive cytotoxic side-product that modifies and can alter proteins, DNA and lipids. This Danio rerio (Zebrafish) protein is Triosephosphate isomerase B (tpi1b).